The following is a 425-amino-acid chain: Dihydroorotase (425 aa).

2 residues coordinate Zn(2+): H56 and H58. Residues 58 to 60 (HYR) and N90 each bind substrate. D148, H175, and H228 together coordinate Zn(2+). Position 274 (N274) interacts with substrate. D301 contacts Zn(2+). D301 is an active-site residue. Substrate-binding positions include H305 and 319–320 (FG).

Belongs to the metallo-dependent hydrolases superfamily. DHOase family. Class I DHOase subfamily. Requires Zn(2+) as cofactor.

It carries out the reaction (S)-dihydroorotate + H2O = N-carbamoyl-L-aspartate + H(+). Its pathway is pyrimidine metabolism; UMP biosynthesis via de novo pathway; (S)-dihydroorotate from bicarbonate: step 3/3. Functionally, catalyzes the reversible cyclization of carbamoyl aspartate to dihydroorotate. This chain is Dihydroorotase, found in Lactobacillus gasseri (strain ATCC 33323 / DSM 20243 / BCRC 14619 / CIP 102991 / JCM 1131 / KCTC 3163 / NCIMB 11718 / NCTC 13722 / AM63).